The sequence spans 279 residues: Shikimate dehydrogenase (NADP(+)) (279 aa).

Shikimate is bound by residues 19–21 (SRS) and Thr66. Lys70 functions as the Proton acceptor in the catalytic mechanism. Residues Asn91 and Asp106 each coordinate shikimate. NADP(+) is bound by residues 129-133 (GAGGA) and Phe222. Shikimate is bound at residue Tyr224. Gly243 contacts NADP(+).

Belongs to the shikimate dehydrogenase family. As to quaternary structure, homodimer.

The catalysed reaction is shikimate + NADP(+) = 3-dehydroshikimate + NADPH + H(+). It functions in the pathway metabolic intermediate biosynthesis; chorismate biosynthesis; chorismate from D-erythrose 4-phosphate and phosphoenolpyruvate: step 4/7. In terms of biological role, involved in the biosynthesis of the chorismate, which leads to the biosynthesis of aromatic amino acids. Catalyzes the reversible NADPH linked reduction of 3-dehydroshikimate (DHSA) to yield shikimate (SA). The polypeptide is Shikimate dehydrogenase (NADP(+)) (Anaeromyxobacter sp. (strain Fw109-5)).